Here is a 274-residue protein sequence, read N- to C-terminus: Mitogen-activated protein kinase 4 (274 aa).

Residues 1–8 and K23 contribute to the ATP site; that span reads GCGGNGLV. In terms of domain architecture, Protein kinase spans 1-274; that stretch reads GCGGNGLVLS…KILTFSPMDR (274 aa). D123 (proton acceptor) is an active-site residue. S160 bears the Phosphoserine mark. The short motif at 160–162 is the SEG motif element; sequence SEG.

This sequence belongs to the protein kinase superfamily. CMGC Ser/Thr protein kinase family. MAP kinase subfamily. Homodimer. Heterodimer with ERK3/MAPK6. Interacts with MAPKAPK5. Mg(2+) serves as cofactor. In terms of processing, phosphorylated by PAK1, PAK2 and PAK3 in the activation loop resulting in catalytic activation. Phosphorylated by MAPKAPK5 at other sites. Exclusively detected in the brain, where expression is restricted to the choroid plexus and hippocampus, and to a lesser extent in lung.

Its subcellular location is the cytoplasm. The protein resides in the nucleus. It catalyses the reaction L-seryl-[protein] + ATP = O-phospho-L-seryl-[protein] + ADP + H(+). The enzyme catalyses L-threonyl-[protein] + ATP = O-phospho-L-threonyl-[protein] + ADP + H(+). Activated by phosphorylation in the activation loop. Its function is as follows. Atypical MAPK protein. Phosphorylates microtubule-associated protein 2 (MAP2) and MAPKAPK5. The precise role of the complex formed with MAPKAPK5 is still unclear, but the complex follows a complex set of phosphorylation events: upon interaction with atypical MAPKAPK5, ERK4/MAPK4 is phosphorylated and then mediates phosphorylation and activation of MAPKAPK5, which in turn phosphorylates ERK4/MAPK4. May promote entry in the cell cycle. The sequence is that of Mitogen-activated protein kinase 4 (Mapk4) from Rattus norvegicus (Rat).